A 358-amino-acid polypeptide reads, in one-letter code: C-C chemokine receptor type 3 (358 aa).

At 1–43 the chain is on the extracellular side; the sequence is MATYPEEAELETEFPGTTFYDYEFAQPCFKVSITDLGAQFLPS. A helical transmembrane segment spans residues 44–64; the sequence is LFSLVFIVGLLGNITVIVVLT. Topologically, residues 65 to 74 are cytoplasmic; sequence KYQKLKIMTN. A helical transmembrane segment spans residues 75 to 95; that stretch reads IYLLNLAISDLLFLFTLPFWT. The Extracellular portion of the chain corresponds to 96–112; the sequence is YYVHWNKWVFGHFMCKI. A helical transmembrane segment spans residues 113–133; it reads ISGLYYVGLFSEIFFIILLTI. The Cytoplasmic portion of the chain corresponds to 134–154; the sequence is DRYLAIVHAVFALRTRTVTFG. A helical membrane pass occupies residues 155 to 175; that stretch reads IITSVITWVLAVLAALPEFMF. Residues 176–206 lie on the Extracellular side of the membrane; that stretch reads YGTQGHFEVLFCGPSYPEKKEHHWKRFQALR. The chain crosses the membrane as a helical span at residues 207–227; the sequence is MNIFGLALPLLIMIICYTGII. The Cytoplasmic segment spans residues 228–243; that stretch reads KTLLRCPSKKKYKAIR. Residues 244–264 form a helical membrane-spanning segment; it reads LIFVIMVVFFVFWTPYNLLLL. Residues 265–287 are Extracellular-facing; sequence FSAFDLSFLDDCERSKQLDMAKH. Residues 288 to 308 traverse the membrane as a helical segment; the sequence is VTEVIAHTHCCINPIIYAFVG. Over 309–358 the chain is Cytoplasmic; sequence ERFQKYLRHFLHRNVTMHLSKYIPFFTSEKLERSSSISPSSGDPELSVVF.

This sequence belongs to the G-protein coupled receptor 1 family.

The protein resides in the cell membrane. Its function is as follows. Receptor for C-C type chemokine. Binds and responds to a variety of chemokines, including CCL11, CCL26, CCL7, CCL13, RANTES(CCL5) and CCL15. Subsequently transduces a signal by increasing the intracellular calcium ions level. In addition acts as a possible functional receptor for NARS1. The protein is C-C chemokine receptor type 3 (CCR3) of Cavia porcellus (Guinea pig).